The primary structure comprises 397 residues: Golgi-associated RAB2 interactor protein 2 (397 aa).

2 disordered regions span residues 1–24 (MKKSNRKSPTRIDEKDDICVPDSK) and 342–397 (QTTL…KLLN). Composition is skewed to basic and acidic residues over residues 10–24 (TRIDEKDDICVPDSK), 353–369 (EKSKEMSDRPREIRTMD), and 376–397 (KAEEPRSRRTDSDTSDKCKLLN).

The protein belongs to the GARIN family. As to quaternary structure, interacts with CALM1.

It localises to the cell projection. The protein localises to the cilium. Its subcellular location is the flagellum. Seems to play a role in sperm motility. This chain is Golgi-associated RAB2 interactor protein 2 (GARIN2), found in Bos taurus (Bovine).